Reading from the N-terminus, the 127-residue chain is UPF0325 protein ASA_3165 (127 aa).

This sequence belongs to the UPF0325 family.

In Aeromonas salmonicida (strain A449), this protein is UPF0325 protein ASA_3165.